The sequence spans 1088 residues: MRNLGLLEITLLCSLFVYFRIDSVSSLNSDGLALLSLLKHFDKVPLEVASTWKENTSETTPCNNNWFGVICDLSGNVVETLNLSASGLSGQLGSEIGELKSLVTLDLSLNSFSGLLPSTLGNCTSLEYLDLSNNDFSGEVPDIFGSLQNLTFLYLDRNNLSGLIPASVGGLIELVDLRMSYNNLSGTIPELLGNCSKLEYLALNNNKLNGSLPASLYLLENLGELFVSNNSLGGRLHFGSSNCKKLVSLDLSFNDFQGGVPPEIGNCSSLHSLVMVKCNLTGTIPSSMGMLRKVSVIDLSDNRLSGNIPQELGNCSSLETLKLNDNQLQGEIPPALSKLKKLQSLELFFNKLSGEIPIGIWKIQSLTQMLVYNNTLTGELPVEVTQLKHLKKLTLFNNGFYGDIPMSLGLNRSLEEVDLLGNRFTGEIPPHLCHGQKLRLFILGSNQLHGKIPASIRQCKTLERVRLEDNKLSGVLPEFPESLSLSYVNLGSNSFEGSIPRSLGSCKNLLTIDLSQNKLTGLIPPELGNLQSLGLLNLSHNYLEGPLPSQLSGCARLLYFDVGSNSLNGSIPSSFRSWKSLSTLVLSDNNFLGAIPQFLAELDRLSDLRIARNAFGGKIPSSVGLLKSLRYGLDLSANVFTGEIPTTLGALINLERLNISNNKLTGPLSVLQSLKSLNQVDVSYNQFTGPIPVNLLSNSSKFSGNPDLCIQASYSVSAIIRKEFKSCKGQVKLSTWKIALIAAGSSLSVLALLFALFLVLCRCKRGTKTEDANILAEEGLSLLLNKVLAATDNLDDKYIIGRGAHGVVYRASLGSGEEYAVKKLIFAEHIRANQNMKREIETIGLVRHRNLIRLERFWMRKEDGLMLYQYMPNGSLHDVLHRGNQGEAVLDWSARFNIALGISHGLAYLHHDCHPPIIHRDIKPENILMDSDMEPHIGDFGLARILDDSTVSTATVTGTTGYIAPENAYKTVRSKESDVYSYGVVLLELVTGKRALDRSFPEDINIVSWVRSVLSSYEDEDDTAGPIVDPKLVDELLDTKLREQAIQVTDLALRCTDKRPENRPSMRDVVKDLTDLESFVRSTSGSVH.

The N-terminal stretch at 1–26 is a signal peptide; it reads MRNLGLLEITLLCSLFVYFRIDSVSS. The Extracellular portion of the chain corresponds to 27 to 739; the sequence is LNSDGLALLS…QVKLSTWKIA (713 aa). Residues Asn-55, Asn-82, and Asn-122 are each glycosylated (N-linked (GlcNAc...) asparagine). LRR repeat units lie at residues 75–99, 100–122, 123–146, 147–170, 172–194, 195–219, 221–243, 244–267, 269–291, 292–315, 316–339, 341–363, 365–387, 388–411, 412–435, 436–459, 460–485, 487–506, 507–529, 530–554, 556–577, 578–602, 603–627, 629–651, 652–676, and 678–698; these read GNVV…IGEL, KSLV…TLGN, CTSL…IFGS, LQNL…SVGG, IELV…LLGN, CSKL…LYLL, NLGE…SSNC, KKLV…IGNC, SLHS…MGML, RKVS…LGNC, SSLE…LSKL, KLQS…IWKI, SLTQ…VTQL, KHLK…LGLN, RSLE…LCHG, QKLR…IRQC, KTLE…SLSL, YVNL…LGSC, KNLL…ELGN, LQSL…LSGC, RLLY…SFRS, WKSL…LAEL, DRLS…GLLK, LRYG…LGAL, INLE…SLKS, and NQVD…LLSN. N-linked (GlcNAc...) asparagine glycans are attached at residues Asn-149, Asn-159, Asn-183, Asn-194, Asn-209, Asn-229, Asn-266, Asn-279, and Asn-314. N-linked (GlcNAc...) asparagine glycosylation is found at Asn-373 and Asn-411. N-linked (GlcNAc...) asparagine glycosylation is found at Asn-537 and Asn-568. 2 N-linked (GlcNAc...) asparagine glycosylation sites follow: Asn-658 and Asn-698. Residues 740 to 760 form a helical membrane-spanning segment; the sequence is LIAAGSSLSVLALLFALFLVL. At 761 to 1088 the chain is on the cytoplasmic side; that stretch reads CRCKRGTKTE…FVRSTSGSVH (328 aa). At Thr-791 the chain carries Phosphothreonine. Residues 794-1080 form the Protein kinase domain; it reads LDDKYIIGRG…KDLTDLESFV (287 aa). Residues 800 to 808 and Lys-822 each bind ATP; that span reads IGRGAHGVV. Tyr-868 and Tyr-908 each carry phosphotyrosine. The active-site Proton acceptor is Asp-921. Tyr-962 and Tyr-969 each carry phosphotyrosine.

This sequence belongs to the protein kinase superfamily. Ser/Thr protein kinase family. As to quaternary structure, interacts with BAK1. Interacts with CLE14.

The protein localises to the cell membrane. It carries out the reaction L-seryl-[protein] + ATP = O-phospho-L-seryl-[protein] + ADP + H(+). The enzyme catalyses L-threonyl-[protein] + ATP = O-phospho-L-threonyl-[protein] + ADP + H(+). In terms of biological role, acts as a receptor for PEP defense peptides. Unlike typical immune receptors, senses an endogenous elicitor that potentiates PAMP-inducible plant responses. The polypeptide is Leucine-rich repeat receptor-like protein kinase PEPR2 (PEPR2) (Arabidopsis thaliana (Mouse-ear cress)).